A 668-amino-acid polypeptide reads, in one-letter code: Metastasis-associated protein MTA2 (668 aa).

Residues 1-144 enclose the BAH domain; sequence MAANMYRVGD…PVQKTLLADQ (144 aa). Phosphoserine occurs at positions 52 and 54. The 112-residue stretch at 145-256 folds into the ELM2 domain; it reads GEIRVGCKFQ…KAMSTLVPQG (112 aa). N6-acetyllysine is present on K152. Positions 263–315 constitute an SANT domain; the sequence is DEMEEWSASEAMLFEEALEKYGKDFNDIRQDFLPWKSLASIVQFYYMWKTTDR. The GATA-type; atypical zinc-finger motif lies at 367-394; sequence CESCHTTQSAQWYAWGPPNMQCRLCASC. The tract at residues 412-437 is disordered; it reads GAARGTTEPHSRGHLSRPEAQSLSPY. Phosphoserine is present on residues S433 and S435. An N6-acetyllysine modification is found at K460. A Glycyl lysine isopeptide (Lys-Gly) (interchain with G-Cter in SUMO2 and SUMO3); alternate cross-link involves residue K492. A Glycyl lysine isopeptide (Lys-Gly) (interchain with G-Cter in SUMO2); alternate cross-link involves residue K492. Residue K508 forms a Glycyl lysine isopeptide (Lys-Gly) (interchain with G-Cter in SUMO2) linkage. Residues K522 and K531 each carry the N6-acetyllysine modification. T534 is subject to Phosphothreonine. Residues K559 and K595 each participate in a glycyl lysine isopeptide (Lys-Gly) (interchain with G-Cter in SUMO2) cross-link. Disordered regions lie at residues 580-599 and 647-668; these read ASGIRSSSQPAAKRQKLNPA and PPVPLPASSHPASTNEPIVLED.

It belongs to the metastasis-associated protein family. In terms of assembly, component of the nucleosome remodeling and deacetylase (NuRD) repressor complex, composed of core proteins MTA1, MTA2, MTA3, RBBP4, RBBP7, HDAC1, HDAC2, MBD2, MBD3, and peripherally associated proteins CDK2AP1, CDK2AP2, GATAD2A, GATAD2B, CHD3, CHD4 and CHD5. The exact stoichiometry of the NuRD complex is unknown, and some subunits such as MBD2 and MBD3, GATAD2A and GATAD2B, and CHD3, CHD4 and CHD5 define mutually exclusive NuRD complexes. Interacts with CHD3. Interacts with CHD4. Interacts with GATAD2A. Interacts with HDAC7. Interacts with MBD3. Interacts with p53/TP53. Interacts with MINT. Interacts with PIMREG. Interacts with NACC2. Interacts with ERCC6. Interacts with PWWP2B. Interacts with transcription factor BCL11A.

Its subcellular location is the nucleus. May function as a transcriptional coregulator. Acts as a component of the histone deacetylase NuRD complex which participates in the remodeling of chromatin. The sequence is that of Metastasis-associated protein MTA2 (Mta2) from Mus musculus (Mouse).